Reading from the N-terminus, the 331-residue chain is Ribose-phosphate pyrophosphokinase (331 aa).

55–57 is an ATP binding site; sequence DGE. 2 residues coordinate Mg(2+): His148 and Asp187. Residue Lys211 is part of the active site. Residues Arg213, Asp237, and 241–245 each bind D-ribose 5-phosphate; that span reads DTAGT.

It belongs to the ribose-phosphate pyrophosphokinase family. Class I subfamily. As to quaternary structure, homohexamer. Mg(2+) is required as a cofactor.

It is found in the cytoplasm. It catalyses the reaction D-ribose 5-phosphate + ATP = 5-phospho-alpha-D-ribose 1-diphosphate + AMP + H(+). The protein operates within metabolic intermediate biosynthesis; 5-phospho-alpha-D-ribose 1-diphosphate biosynthesis; 5-phospho-alpha-D-ribose 1-diphosphate from D-ribose 5-phosphate (route I): step 1/1. Its function is as follows. Involved in the biosynthesis of the central metabolite phospho-alpha-D-ribosyl-1-pyrophosphate (PRPP) via the transfer of pyrophosphoryl group from ATP to 1-hydroxyl of ribose-5-phosphate (Rib-5-P). The protein is Ribose-phosphate pyrophosphokinase of Synechococcus elongatus (strain ATCC 33912 / PCC 7942 / FACHB-805) (Anacystis nidulans R2).